The sequence spans 380 residues: Sterol 24-C-methyltransferase ERG6B (380 aa).

This sequence belongs to the class I-like SAM-binding methyltransferase superfamily. Erg6/SMT family.

The catalysed reaction is lanosterol + S-adenosyl-L-methionine = eburicol + S-adenosyl-L-homocysteine + H(+). It functions in the pathway steroid metabolism; ergosterol biosynthesis. Its function is as follows. Sterol 24-C-methyltransferase; part of the third module of ergosterol biosynthesis pathway that includes the late steps of the pathway. ERG6A and ERG6B methylate lanosterol at C-24 to produce eburicol. The third module or late pathway involves the ergosterol synthesis itself through consecutive reactions that mainly occur in the endoplasmic reticulum (ER) membrane. Firstly, the squalene synthase ERG9 catalyzes the condensation of 2 farnesyl pyrophosphate moieties to form squalene, which is the precursor of all steroids. Squalene synthase is crucial for balancing the incorporation of farnesyl diphosphate (FPP) into sterol and nonsterol isoprene synthesis. Secondly, squalene is converted into lanosterol by the consecutive action of the squalene epoxidase ERG1 and the lanosterol synthase ERG7. Then, the delta(24)-sterol C-methyltransferase ERG6 methylates lanosterol at C-24 to produce eburicol. Eburicol is the substrate of the sterol 14-alpha demethylase encoded by CYP51A, CYP51B and CYP51C, to yield 4,4,24-trimethyl ergosta-8,14,24(28)-trienol. CYP51B encodes the enzyme primarily responsible for sterol 14-alpha-demethylation, and plays an essential role in ascospore formation. CYP51A encodes an additional sterol 14-alpha-demethylase, induced on ergosterol depletion and responsible for the intrinsic variation in azole sensitivity. The third CYP51 isoform, CYP51C, does not encode a sterol 14-alpha-demethylase, but is required for full virulence on host wheat ears. The C-14 reductase ERG24 then reduces the C14=C15 double bond which leads to 4,4-dimethylfecosterol. A sequence of further demethylations at C-4, involving the C-4 demethylation complex containing the C-4 methylsterol oxidases ERG25, the sterol-4-alpha-carboxylate 3-dehydrogenase ERG26 and the 3-keto-steroid reductase ERG27, leads to the production of fecosterol via 4-methylfecosterol. ERG28 has a role as a scaffold to help anchor ERG25, ERG26 and ERG27 to the endoplasmic reticulum. The C-8 sterol isomerase ERG2 then catalyzes the reaction which results in unsaturation at C-7 in the B ring of sterols and thus converts fecosterol to episterol. The sterol-C5-desaturases ERG3A and ERG3BB then catalyze the introduction of a C-5 double bond in the B ring to produce 5-dehydroepisterol. The C-22 sterol desaturases ERG5A and ERG5B further convert 5-dehydroepisterol into ergosta-5,7,22,24(28)-tetraen-3beta-ol by forming the C-22(23) double bond in the sterol side chain. Finally, ergosta-5,7,22,24(28)-tetraen-3beta-ol is substrate of the C-24(28) sterol reductase ERG4 to produce ergosterol. In Gibberella zeae (strain ATCC MYA-4620 / CBS 123657 / FGSC 9075 / NRRL 31084 / PH-1) (Wheat head blight fungus), this protein is Sterol 24-C-methyltransferase ERG6B.